Reading from the N-terminus, the 420-residue chain is Corticotropin-releasing factor receptor 1 (420 aa).

An N-terminal signal peptide occupies residues 1-28 (MVPGPRPALLLLLFLLQAFLLWDSPVAA). At 29-116 (SIQEQYCESL…CQEILSEEKR (88 aa)) the chain is on the extracellular side. 3 cysteine pairs are disulfide-bonded: cysteine 35–cysteine 59, cysteine 49–cysteine 92, and cysteine 73–cysteine 107. Residues asparagine 43, asparagine 50, asparagine 83, asparagine 95, and asparagine 103 are each glycosylated (N-linked (GlcNAc...) asparagine). A helical membrane pass occupies residues 117-147 (SKLHYHIAVIINYLGHCVSLGTLLVAFVLFM). The Cytoplasmic segment spans residues 148–154 (RLRSIRC). The helical transmembrane segment at 155–179 (LRNIIHWNLITAFILRNATWFVVQL) threads the bilayer. Over 180-194 (TMNPEVHESNVVWCR) the chain is Extracellular. A disulfide bond links cysteine 193 and cysteine 263. The helical transmembrane segment at 195–223 (LVTAAYNYFHVTNFFWMFGEGCYLHTAIV) threads the bilayer. At 224–230 (LTYSTDK) the chain is on the cytoplasmic side. Residues 231–258 (LRKWMFICIGWCIPFPIIVAWAIGKLYY) traverse the membrane as a helical segment. Residues 259-274 (DNEKCWFGKRAGVYTD) are Extracellular-facing. Residues 275-300 (YIYQGPMILVLLINFIFLFNIVRILM) traverse the membrane as a helical segment. Topologically, residues 301–311 (TKLRASTTSET) are cytoplasmic. Residues 312–336 (IQYRKAVKATLVLLSLLGITYMLFF) traverse the membrane as a helical segment. Over 337–343 (VNPGEDE) the chain is Extracellular. The helical transmembrane segment at 344 to 373 (ISRIVFIYFNSFLESFQGFFVSVFYCFLNS) threads the bilayer. The Cytoplasmic portion of the chain corresponds to 374 to 420 (EVRSAVRKRWHRWQDKHSIRARVARAMSIPTSPTRVSFHSIKQSSAV).

Belongs to the G-protein coupled receptor 2 family. In terms of assembly, interacts (via N-terminal extracellular domain) with CRF and UCN.

The protein resides in the cell membrane. In terms of biological role, G-protein coupled receptor for CRH (corticotropin-releasing factor) and UCN (urocortin). Has high affinity for CRH and UCN. Ligand binding causes a conformation change that triggers signaling via guanine nucleotide-binding proteins (G proteins) and down-stream effectors, such as adenylate cyclase. Promotes the activation of adenylate cyclase, leading to increased intracellular cAMP levels. In Gallus gallus (Chicken), this protein is Corticotropin-releasing factor receptor 1 (CRHR1).